Consider the following 637-residue polypeptide: Biosynthetic arginine decarboxylase (637 aa).

Lysine 101 carries the N6-(pyridoxal phosphate)lysine modification. 286–296 (FDVGGGLAVDY) contacts substrate.

This sequence belongs to the Orn/Lys/Arg decarboxylase class-II family. SpeA subfamily. Mg(2+) serves as cofactor. The cofactor is pyridoxal 5'-phosphate.

The catalysed reaction is L-arginine + H(+) = agmatine + CO2. It participates in amine and polyamine biosynthesis; agmatine biosynthesis; agmatine from L-arginine: step 1/1. In terms of biological role, catalyzes the biosynthesis of agmatine from arginine. The protein is Biosynthetic arginine decarboxylase of Shewanella sp. (strain ANA-3).